We begin with the raw amino-acid sequence, 144 residues long: Maximins 7/H13 (144 aa).

Positions 1-18 (MNFKYIVAVSFLIASAYA) are cleaved as a signal peptide. The propeptide occupies 19 to 43 (RSEENDEQSLSQRDVLEEESLREIR). The residue at position 70 (Asn-70) is an Asparagine amide. Residues 74 to 123 (TAEDHEVMKRLEAVMRDLDSLDYPEEAAERETRGFNQEEIANLFTKKEKR) constitute a propeptide that is removed on maturation. Leu-143 carries the leucine amide modification.

Belongs to the bombinin family. Expressed by the skin glands.

It localises to the secreted. In terms of biological role, maximin-7 shows antimicrobial activity against bacteria and against the fungus C.albicans. It has little hemolytic activity. Functionally, maximin-H13 shows antimicrobial activity against bacteria and against the fungus C.albicans. Shows strong hemolytic activity. The polypeptide is Maximins 7/H13 (Bombina maxima (Giant fire-bellied toad)).